A 527-amino-acid polypeptide reads, in one-letter code: Ribosomal protein S6 kinase beta-1 (527 aa).

The interval 1–54 (MRRRRRRDGFYPAPDFRDREAEDMAGVFDIDLDQPEDAGSEDELEEGGQLNESM) is disordered. The TOS motif signature appears at 28 to 32 (FDIDL). Acidic residues predominate over residues 30 to 46 (IDLDQPEDAGSEDELEE). The Protein kinase domain occupies 91–352 (FELLRVLGKG…AGEVQAHPFF (262 aa)). Residues 97 to 105 (LGKGGYGKV) and Lys-123 contribute to the ATP site. The Proton acceptor role is filled by Asp-218. Thr-252 is modified (phosphothreonine; by PDPK1). The AGC-kinase C-terminal domain occupies 353 to 423 (RHINWEELLA…VAPSVLESVK (71 aa)). Ser-394 is subject to Phosphoserine. Thr-412 carries the post-translational modification Phosphothreonine; by MTOR, NEK6 and NEK7. The autoinhibitory domain stretch occupies residues 424–527 (EKFSFEPKIR…PEHLRMNLEL (104 aa)). Phosphoserine is present on residues Ser-434 and Ser-441. A Phosphothreonine modification is found at Thr-444. Phosphoserine occurs at positions 447 and 452. The residue at position 516 (Lys-516) is an N6-acetyllysine.

This sequence belongs to the protein kinase superfamily. AGC Ser/Thr protein kinase family. S6 kinase subfamily. In terms of assembly, interacts with PPP1R9A/neurabin-1. Interacts with RPTOR. Interacts with IRS1. Interacts with EIF3B and EIF3C. Interacts with TRAF4. Interacts with POLDIP3. Interacts (via N-terminus) with IER5. Post-translationally, phosphorylation at Thr-412 is regulated by mTORC1. The phosphorylation at this site is maintained by an agonist-dependent autophosphorylation mechanism. Activated by phosphorylation at Thr-252 by PDPK1. Dephosphorylation by PPP1CC at Thr-412 in mitochondrion.

It localises to the cytoplasm. The protein resides in the synapse. It is found in the synaptosome. The protein localises to the mitochondrion outer membrane. Its subcellular location is the mitochondrion. The catalysed reaction is L-seryl-[protein] + ATP = O-phospho-L-seryl-[protein] + ADP + H(+). The enzyme catalyses L-threonyl-[protein] + ATP = O-phospho-L-threonyl-[protein] + ADP + H(+). Inactivated by binding to URI1. Activation requires multiple phosphorylation events on serine/threonine residues. Activation appears to be first mediated by phosphorylation of multiple sites in the autoinhibitory domain, which facilitates phosphorylation at Thr-412, disrupting the autoinhibitory mechanism and allowing phosphorylation of Thr-252 by PDPK1. The active conformation of the kinase is believed to be stabilized by a mechanism involving three conserved phosphorylation sites located in the kinase domain activation loop (Thr-252) and in the AGC-kinase C-terminal domain (Ser-394 in the middle of the tail/linker region and Thr-412 within a hydrophobic motif at its end). Activated by mTORC1; isoform Alpha I and isoform Alpha II are sensitive to rapamycin, which inhibits activating phosphorylation at Thr-412. Activated by PDPK1. In terms of biological role, serine/threonine-protein kinase that acts downstream of mTOR signaling in response to growth factors and nutrients to promote cell proliferation, cell growth and cell cycle progression. Regulates protein synthesis through phosphorylation of EIF4B, RPS6 and EEF2K, and contributes to cell survival by repressing the pro-apoptotic function of BAD. Under conditions of nutrient depletion, the inactive form associates with the EIF3 translation initiation complex. Upon mitogenic stimulation, phosphorylation by the mechanistic target of rapamycin complex 1 (mTORC1) leads to dissociation from the EIF3 complex and activation. The active form then phosphorylates and activates several substrates in the pre-initiation complex, including the EIF2B complex and the cap-binding complex component EIF4B. Also controls translation initiation by phosphorylating a negative regulator of EIF4A, PDCD4, targeting it for ubiquitination and subsequent proteolysis. Promotes initiation of the pioneer round of protein synthesis by phosphorylating POLDIP3/SKAR. In response to IGF1, activates translation elongation by phosphorylating EEF2 kinase (EEF2K), which leads to its inhibition and thus activation of EEF2. Also plays a role in feedback regulation of mTORC2 by mTORC1 by phosphorylating MAPKAP1/SIN1, MTOR and RICTOR, resulting in the inhibition of mTORC2 and AKT1 signaling. Also involved in feedback regulation of mTORC1 and mTORC2 by phosphorylating DEPTOR. Mediates cell survival by phosphorylating the pro-apoptotic protein BAD and suppressing its pro-apoptotic function. Phosphorylates mitochondrial URI1 leading to dissociation of a URI1-PPP1CC complex. The free mitochondrial PPP1CC can then dephosphorylate RPS6KB1 at Thr-412, which is proposed to be a negative feedback mechanism for the RPS6KB1 anti-apoptotic function. Mediates TNF-alpha-induced insulin resistance by phosphorylating IRS1 at multiple serine residues, resulting in accelerated degradation of IRS1. In cells lacking functional TSC1-2 complex, constitutively phosphorylates and inhibits GSK3B. May be involved in cytoskeletal rearrangement through binding to neurabin. Phosphorylates and activates the pyrimidine biosynthesis enzyme CAD, downstream of MTOR. Following activation by mTORC1, phosphorylates EPRS and thereby plays a key role in fatty acid uptake by adipocytes and also most probably in interferon-gamma-induced translation inhibition. The chain is Ribosomal protein S6 kinase beta-1 (RPS6KB1) from Bos taurus (Bovine).